Consider the following 333-residue polypeptide: Fe(3+)-citrate import system permease protein YfmE (333 aa).

8 consecutive transmembrane segments (helical) span residues 12 to 32 (LLAI…SIGI), 65 to 85 (IILA…LQGV), 95 to 115 (VVGI…IFPE), 120 to 140 (VLPF…LMIA), 194 to 214 (EVKL…ILIP), 238 to 258 (FILI…VGSI), 279 to 299 (YLLP…DTLG), and 306 to 326 (VEIP…LYLL).

The protein belongs to the binding-protein-dependent transport system permease family. FecCD subfamily. The complex is composed of one ATP-binding protein (YfmF), two transmembrane proteins (YfmD and YfmE) and a solute-binding protein (YfmC).

The protein localises to the cell membrane. Part of the ABC transporter complex YfmCDEF involved in citrate-dependent Fe(3+) import. Involved in the translocation of the substrate across the membrane. In Bacillus subtilis (strain 168), this protein is Fe(3+)-citrate import system permease protein YfmE (yfmE).